The primary structure comprises 148 residues: uncharacterized protein (148 aa).

The tract at residues 122 to 148 (HNWRKRMGTRRGRHEQSPTSRPRKGPD) is disordered. The span at 123–134 (NWRKRMGTRRGR) shows a compositional bias: basic residues.

This is an uncharacterized protein from Homo sapiens (Human).